The sequence spans 226 residues: ATP-dependent dethiobiotin synthetase BioD (226 aa).

ATP is bound at residue 12–17; the sequence is GVGKTV. A Mg(2+)-binding site is contributed by T16. Residue K37 is part of the active site. A substrate-binding site is contributed by T41. ATP is bound by residues D49, 108–111, and 197–199; these read EGAG and PAG. 2 residues coordinate Mg(2+): D49 and E108.

Belongs to the dethiobiotin synthetase family. As to quaternary structure, homodimer. It depends on Mg(2+) as a cofactor.

Its subcellular location is the cytoplasm. It carries out the reaction (7R,8S)-7,8-diammoniononanoate + CO2 + ATP = (4R,5S)-dethiobiotin + ADP + phosphate + 3 H(+). It participates in cofactor biosynthesis; biotin biosynthesis; biotin from 7,8-diaminononanoate: step 1/2. Catalyzes a mechanistically unusual reaction, the ATP-dependent insertion of CO2 between the N7 and N8 nitrogen atoms of 7,8-diaminopelargonic acid (DAPA, also called 7,8-diammoniononanoate) to form a ureido ring. This Mycobacterium avium (strain 104) protein is ATP-dependent dethiobiotin synthetase BioD.